A 132-amino-acid polypeptide reads, in one-letter code: Transmembrane protein 170B (132 aa).

Over Met-1–Trp-37 the chain is Extracellular. Asn-12 carries N-linked (GlcNAc...) asparagine glycosylation. Residues Ile-38–Phe-58 traverse the membrane as a helical segment. The Cytoplasmic segment spans residues Val-59 to Arg-68. A helical transmembrane segment spans residues Val-69–Thr-89. Topologically, residues Ser-90–Met-104 are extracellular. Residues Ala-105–Phe-125 traverse the membrane as a helical segment. Residues Ser-126–Leu-132 lie on the Cytoplasmic side of the membrane.

The protein belongs to the TMEM170 family. Interacts with CTNNB1.

It is found in the cell membrane. The protein is Transmembrane protein 170B of Mus musculus (Mouse).